We begin with the raw amino-acid sequence, 239 residues long: Probable transcriptional regulatory protein BBR47_14810 (239 aa).

This sequence belongs to the TACO1 family. YeeN subfamily.

It localises to the cytoplasm. In Brevibacillus brevis (strain 47 / JCM 6285 / NBRC 100599), this protein is Probable transcriptional regulatory protein BBR47_14810.